The chain runs to 1119 residues: Solute carrier family 38 member 10 (1119 aa).

A run of 10 helical transmembrane segments spans residues 4–24, 36–58, 84–104, 120–140, 153–173, 229–249, 272–292, 323–343, 345–365, and 378–398; these read AAAS…GVSV, IVLG…MFLV, LVET…YVVI, VGGT…VLPL, FSAM…LSSL, IFAS…FFGY, MLRV…ILPC, ALTL…PNVE, ILGL…PALI, and VVLW…LSVS. 2 disordered regions span residues 438-691 and 731-1071; these read AEDG…EEAG and KEIH…DGVI. Basic and acidic residues-rich tracts occupy residues 439–454, 466–475, 493–522, 544–559, and 592–603; these read EDGR…REEL, PGREDGKEAP, EAHR…ENKP, DSER…EVGK, and AKEDLGPGDRGL. Residue serine 612 is modified to Phosphoserine. Over residues 652–667 the composition is skewed to pro residues; the sequence is PPLPAEKPAPGPGLPP. Composition is skewed to basic and acidic residues over residues 668–677, 731–752, and 763–773; these read EPREQRDVER, KEIH…EVHQ, and EAPEGKARETV. At threonine 772 the chain carries Phosphothreonine. Position 802 is a phosphoserine (serine 802). Composition is skewed to basic and acidic residues over residues 832–841 and 863–876; these read KLRDGQKDAA and PARE…RLAE. The segment covering 880–889 has biased composition (polar residues); the sequence is GQSQDVTGGS. Serine 889, serine 965, and serine 997 each carry phosphoserine. Basic and acidic residues-rich tracts occupy residues 975 to 1005, 1012 to 1022, and 1033 to 1042; these read HRLD…RGGE, PRQRPEPELGL, and DNAKPNRDLK.

This sequence belongs to the amino acid/polyamine transporter 2 family.

The protein resides in the membrane. It carries out the reaction L-glutamate(out) = L-glutamate(in). It catalyses the reaction L-glutamine(out) = L-glutamine(in). The catalysed reaction is L-alanine(in) = L-alanine(out). The enzyme catalyses L-serine(in) = L-serine(out). It carries out the reaction L-leucine(in) = L-leucine(out). In terms of biological role, facilitates bidirectional transport of amino acids. May act as a glutamate sensor that regulates glutamate-glutamine cycle and mTOR signaling in the brain. The transport mechanism remains to be elucidated. The chain is Solute carrier family 38 member 10 from Homo sapiens (Human).